We begin with the raw amino-acid sequence, 446 residues long: Phosphoglucosamine mutase (446 aa).

The active-site Phosphoserine intermediate is the Ser103. Residues Ser103, Asp242, Asp244, and Asp246 each coordinate Mg(2+). Ser103 carries the phosphoserine modification.

This sequence belongs to the phosphohexose mutase family. The cofactor is Mg(2+). Post-translationally, activated by phosphorylation.

The enzyme catalyses alpha-D-glucosamine 1-phosphate = D-glucosamine 6-phosphate. Functionally, catalyzes the conversion of glucosamine-6-phosphate to glucosamine-1-phosphate. This is Phosphoglucosamine mutase from Vibrio atlanticus (strain LGP32) (Vibrio splendidus (strain Mel32)).